The sequence spans 80 residues: MKTTILILLILGLGINAKSLEERKSEEEKAFKLLGRIIHHVGNFVYGFSHVFGDDQQDNGKFYGHYAEDNGKHWYDTGDQ.

Positions 1–19 (MKTTILILLILGLGINAKS) are cleaved as a signal peptide. Residues 20–29 (LEERKSEEEK) constitute a propeptide that is removed on maturation. Position 52 is a phenylalanine amide (F52). Residues 54–80 (DDQQDNGKFYGHYAEDNGKHWYDTGDQ) constitute a propeptide that is removed on maturation.

In terms of tissue distribution, hemocytes and pharyngeal tissues.

The protein localises to the secreted. Functionally, has antimicrobial activity against E.coli, L.monocytogenes and C.albicans. This Styela clava (Sea squirt) protein is Clavanin-D.